The sequence spans 64 residues: Large ribosomal subunit protein bL35 (64 aa).

A compositionally biased stretch (basic residues) spans 1–24 (MPKMKSHRGACKRFKKTASGKVKR). Positions 1–64 (MPKMKSHRGA…EKQIKRMILA (64 aa)) are disordered. Residues 25-35 (ERMYGSHNLEK) are compositionally biased toward basic and acidic residues. Over residues 36–45 (KNRKRTRRLH) the composition is skewed to basic residues.

The protein belongs to the bacterial ribosomal protein bL35 family.

This is Large ribosomal subunit protein bL35 from Prosthecochloris aestuarii (strain DSM 271 / SK 413).